The sequence spans 395 residues: Elongation factor Tu (395 aa).

A tr-type G domain is found at 10–204 (KPHVNIGTIG…VVDEYIPTPV (195 aa)). Residues 19–26 (GHVDHGKT) form a G1 region. A GTP-binding site is contributed by 19–26 (GHVDHGKT). Residue T26 coordinates Mg(2+). A G2 region spans residues 60–64 (GITIN). Residues 81–84 (DAPG) form a G3 region. GTP-binding positions include 81-85 (DAPGH) and 136-139 (NKTD). Residues 136–139 (NKTD) form a G4 region. Residues 174-176 (SAL) form a G5 region.

The protein belongs to the TRAFAC class translation factor GTPase superfamily. Classic translation factor GTPase family. EF-Tu/EF-1A subfamily. As to quaternary structure, monomer.

The protein resides in the cytoplasm. The catalysed reaction is GTP + H2O = GDP + phosphate + H(+). In terms of biological role, GTP hydrolase that promotes the GTP-dependent binding of aminoacyl-tRNA to the A-site of ribosomes during protein biosynthesis. This Lactiplantibacillus plantarum (strain ATCC BAA-793 / NCIMB 8826 / WCFS1) (Lactobacillus plantarum) protein is Elongation factor Tu.